The chain runs to 274 residues: Thiamine kinase (274 aa).

It belongs to the thiamine kinase family.

The enzyme catalyses thiamine + ATP = thiamine phosphate + ADP + H(+). It functions in the pathway cofactor biosynthesis; thiamine diphosphate biosynthesis; thiamine phosphate from thiamine: step 1/1. Catalyzes the ATP-dependent phosphorylation of thiamine to thiamine phosphate. Is involved in thiamine salvage. This chain is Thiamine kinase, found in Escherichia coli O81 (strain ED1a).